The following is an 81-amino-acid chain: WAP four-disulfide core domain protein 13 (81 aa).

The N-terminal stretch at 1–22 is a signal peptide; sequence MRPVSPLQLLLVLSLAPQPVLG. Positions 31–74 constitute a WAP domain; it reads YILEPPPCRSEPGACNMFCTQQEECPEPLQCCSAYCGIVCTSNQ. Intrachain disulfides connect cysteine 38/cysteine 62, cysteine 45/cysteine 66, cysteine 49/cysteine 61, and cysteine 55/cysteine 70.

It is found in the secreted. Putative acid-stable proteinase inhibitor. This chain is WAP four-disulfide core domain protein 13 (Wfdc13), found in Mus musculus (Mouse).